A 360-amino-acid polypeptide reads, in one-letter code: Glutamine synthetase (360 aa).

Positions 26–105 (IMAEYIWIDA…VLSECWNADG (80 aa)) constitute a GS beta-grasp domain. The region spanning 112–360 (YRHECAKLME…METIYGSVDN (249 aa)) is the GS catalytic domain.

It belongs to the glutamine synthetase family. In terms of assembly, homooctamer.

It localises to the cytoplasm. The catalysed reaction is L-glutamate + NH4(+) + ATP = L-glutamine + ADP + phosphate + H(+). The chain is Glutamine synthetase (GLN1) from Colletotrichum gloeosporioides (Anthracnose fungus).